Consider the following 688-residue polypeptide: Small ribosomal subunit protein mS39 (688 aa).

The transit peptide at 1–37 (MASVASARWLRVSCGLCVPLTARRAGPCGRTPSSRFY) directs the protein to the mitochondrion. Residue Lys-126 is modified to N6-acetyllysine. PPR repeat units lie at residues 149 to 183 (IEEISEAALQERIKLKKVKASVDIFDQLLQAGTTV), 184 to 219 (SLETTNSLLDLLCYYGNQEPSTNYNFQQHEQTEELE), 258 to 292 (NAHSYCTMIRGMVKHRAHTQALSMYTELLNNRLRA), 293 to 333 (DVHT…NVKP), 334 to 370 (NLQTFNTILKCLRRFYAFGKLPALQTFREMKAIGIEP), 371 to 412 (SLAT…SPKD), 415 to 449 (DDMFFQSAMRVCSSLRDLELAYQVHGLLNTGDNRK), 457 to 491 (RNFYYSKFFSLLCLMEQIDVTLKWYKDLIPSVFFP), 492 to 526 (HSQTLIDLLQALDVANRLEMIPQIWKDSKEYGHTF), and 575 to 609 (PANSLNYIAILFLRAGRTQEAWKMLGLFRKHNKIP). Residues 667–688 (GDLTALTSDSESDSDSDTSKDK) form a disordered region.

It belongs to the mitochondrion-specific ribosomal protein mS39 family. As to quaternary structure, component of the mitochondrial ribosome small subunit (28S) which comprises a 12S rRNA and about 30 distinct proteins. Associated with the 12S mitochondrial rRNA (12S mt-rRNA).

The protein resides in the mitochondrion. In terms of biological role, mitochondrial RNA-binding protein that has a role in mitochondrial translation. The polypeptide is Small ribosomal subunit protein mS39 (PTCD3) (Bos taurus (Bovine)).